Here is a 331-residue protein sequence, read N- to C-terminus: MISFSSFYQQIADSNLQHWLETLPSILGKWQRDHKHGNLPKWEKVLNKLHYPAPDQVDFIDSVTVGSGEQLSPGEKEKLENLLRLFMPWRKGPFHIHGIHIDTEWRSDWKWDRVKQHISPLKNRTVLDVGCGSGYHMWRMLGSGAKRVVGIDPSPLFLCQFEAVKRLAGTHHPVHLLPLGIEELPPLDAFDTVFSMGVLYHRRSPIDHLLQLRDQLRTGGELVLETLVIDGDENAVLVPQDRYGKMNNVWFIPSVAALMLWLKKCDFTDIRCVDTDVTALAEQRRTDWMPNESLVEYLDPNDITKTVEGYPAPKRATIIAVKNQPNQDLIS.

Residues K91, W105, K110, G130, 152 to 154 (DPS), 181 to 182 (IE), M196, Y200, and R315 each bind carboxy-S-adenosyl-L-methionine.

Belongs to the class I-like SAM-binding methyltransferase superfamily. CmoB family. In terms of assembly, homotetramer.

The enzyme catalyses carboxy-S-adenosyl-L-methionine + 5-hydroxyuridine(34) in tRNA = 5-carboxymethoxyuridine(34) in tRNA + S-adenosyl-L-homocysteine + H(+). Catalyzes carboxymethyl transfer from carboxy-S-adenosyl-L-methionine (Cx-SAM) to 5-hydroxyuridine (ho5U) to form 5-carboxymethoxyuridine (cmo5U) at position 34 in tRNAs. This chain is tRNA U34 carboxymethyltransferase, found in Shewanella baltica (strain OS155 / ATCC BAA-1091).